The following is a 128-amino-acid chain: Putative transmembrane protein 244 (128 aa).

Helical transmembrane passes span 17 to 37 (FLLC…MGCV), 65 to 85 (VLLV…VPVV), and 93 to 113 (AISV…EFPL).

The protein resides in the membrane. The chain is Putative transmembrane protein 244 (TMEM244) from Homo sapiens (Human).